Reading from the N-terminus, the 351-residue chain is Uroporphyrinogen decarboxylase (351 aa).

Residues 25–29 (RQAGR), aspartate 74, tyrosine 151, serine 206, and histidine 325 each bind substrate.

It belongs to the uroporphyrinogen decarboxylase family. Homodimer.

It is found in the cytoplasm. The enzyme catalyses uroporphyrinogen III + 4 H(+) = coproporphyrinogen III + 4 CO2. Its pathway is porphyrin-containing compound metabolism; protoporphyrin-IX biosynthesis; coproporphyrinogen-III from 5-aminolevulinate: step 4/4. Its function is as follows. Catalyzes the decarboxylation of four acetate groups of uroporphyrinogen-III to yield coproporphyrinogen-III. The chain is Uroporphyrinogen decarboxylase from Chlorobium phaeovibrioides (strain DSM 265 / 1930) (Prosthecochloris vibrioformis (strain DSM 265)).